The chain runs to 107 residues: Snaclec VP12 subunit A (107 aa).

2 disulfides stabilise this stretch: cysteine 4–cysteine 15 and cysteine 32–cysteine 107. One can recognise a C-type lectin domain in the interval 11–107 (YEGNCYKAFD…ECGLAYPFIC (97 aa)).

This sequence belongs to the snaclec family. In terms of assembly, heterodimer of subunits alpha and beta; disulfide-linked. Expressed by the venom gland.

The protein localises to the secreted. Functionally, inhibits integrin alpha-2/beta-1- (ITGA2/ITGB1) dependent melanoma metastasis. This is Snaclec VP12 subunit A from Daboia palaestinae (Palestine viper).